The sequence spans 519 residues: Cytochrome P450 monooxygenase apdE (519 aa).

Residues 27 to 47 (FVFFAFVVYSCFTIAVGWVVY) traverse the membrane as a helical segment. 2 N-linked (GlcNAc...) asparagine glycosylation sites follow: Asn327 and Asn379. A heme-binding site is contributed by Cys466. Residue Asn508 is glycosylated (N-linked (GlcNAc...) asparagine).

The protein belongs to the cytochrome P450 family. Requires heme as cofactor.

It localises to the membrane. The protein operates within secondary metabolite biosynthesis. In terms of biological role, cytochrome P450 monooxygenase; part of the gene cluster that mediates the biosynthesis of aspyridones. The polyketide-amino acid backbone preaspyridone A is first assembled by the PKS-NRPS hybrid apdA. The assembly of preaspyridone A is initiated by loading of malonyl-CoA onto apdA, followed by decarboxylation to yield the acetyl starter unit. The growing polyketide chain then elongates into a tetraketide. The adpA PKS module catalyzes three Claisen condensations, as well as beta-keto processing and methylation. Alpha-methylation step during polyketide synthesis is a prerequisite and a key checkpoint for chain transfer between PKS and NRPS modules. The downstream NRPS module contains the condensation (C), adenylation (A), and thiolation (T) domains and catalyzes the incorporation of tyrosine via the formation of the L-tyrosinyl-thioester and the amide linkage between L-tyrosinyl-thioester and the tetraketide. The bimodular assembly line is terminated with a reductase (R) domain that facilitates formation and release of the tetramic acid product. Because apdA lacks a designated enoylreductase (ER) domain, the required activity is provided the enoyl reductase apdC. ApdC appears to operate with different stereoselectivity in different PKS cycle. Combined with apdC, apdA is proposed to synthesize preaspyridone A via about 20 enzymatic steps. A number of oxidative steps performed successively by the cytochrome P450 monooxygenases apdE and apdB are required for the conversion of preaspyridone A to aspyridone A. The cytochrome P450 monooxygenase apdE is responsible for the oxidative dephenylation of preaspyridone A. Finally, the predicted FAD-dependent monooxygenase apdD and the acyl-CoA dehydrogenase apdG may be involved in the transformation of aspyridone A into aspyridone B. The chain is Cytochrome P450 monooxygenase apdE from Emericella nidulans (strain FGSC A4 / ATCC 38163 / CBS 112.46 / NRRL 194 / M139) (Aspergillus nidulans).